A 629-amino-acid polypeptide reads, in one-letter code: Glutamyl-tRNA(Gln) amidotransferase subunit E (629 aa).

The tract at residues 405–426 (PEETRRALPDGNTQYMRPLPGK) is disordered.

The protein belongs to the GatB/GatE family. GatE subfamily. As to quaternary structure, heterodimer of GatD and GatE.

It catalyses the reaction L-glutamyl-tRNA(Gln) + L-glutamine + ATP + H2O = L-glutaminyl-tRNA(Gln) + L-glutamate + ADP + phosphate + H(+). In terms of biological role, allows the formation of correctly charged Gln-tRNA(Gln) through the transamidation of misacylated Glu-tRNA(Gln) in organisms which lack glutaminyl-tRNA synthetase. The reaction takes place in the presence of glutamine and ATP through an activated gamma-phospho-Glu-tRNA(Gln). The GatDE system is specific for glutamate and does not act on aspartate. The chain is Glutamyl-tRNA(Gln) amidotransferase subunit E from Thermococcus sibiricus (strain DSM 12597 / MM 739).